Here is a 354-residue protein sequence, read N- to C-terminus: Guanine nucleotide-binding protein G(o) subunit alpha (354 aa).

Glycine 2 is lipidated: N-myristoyl glycine. Cysteine 3 is lipidated: S-palmitoyl cysteine. Residues 32–354 enclose the G-alpha domain; the sequence is KDVKLLLLGA…ANNLRGCGLY (323 aa). Residues 35 to 48 form a G1 motif region; that stretch reads KLLLLGAGESGKST. GTP contacts are provided by glutamate 43, lysine 46, serine 47, threonine 48, serine 152, leucine 176, arginine 177, threonine 178, and arginine 179. Residue serine 47 coordinates Mg(2+). Residues 174–182 are G2 motif; sequence DILRTRVKT. Arginine 179 is subject to ADP-ribosylarginine; by cholera toxin. Threonine 182 contacts Mg(2+). The G3 motif stretch occupies residues 197 to 206; sequence FRLFDVGGQR. At glutamine 205 the chain carries 5-glutamyl histamine. The segment at 266–273 is G4 motif; the sequence is ILFLNKKD. The GTP site is built by asparagine 270, aspartate 273, and cysteine 325. The tract at residues 324 to 329 is G5 motif; it reads TCATDT. Cysteine 351 is lipidated: S-palmitoyl cysteine. ADP-ribosylcysteine; by pertussis toxin is present on cysteine 351.

The protein belongs to the G-alpha family. G(i/o/t/z) subfamily. As to quaternary structure, g proteins are composed of 3 units; alpha, beta and gamma. The alpha chain contains the guanine nucleotide binding site. Forms a complex with GNB1 and GNG3. Interacts with RGS14. Interacts with RGS16. Interacts with RGS19. Interacts (when palmitoylated) with ADGRG3. Histaminylated at Gln-205 residues by TGM2. Post-translationally, palmitoylated at Cys-351, leading to binding to ADGRG3.

The protein localises to the cell membrane. It localises to the membrane. The enzyme catalyses GTP + H2O = GDP + phosphate + H(+). The GTPase activity is promoted by GTPAse activators, such as RGS14, RGS16 and RGS19. Its function is as follows. Guanine nucleotide-binding proteins (G proteins) function as transducers downstream of G protein-coupled receptors (GPCRs) in numerous signaling cascades. The alpha chain contains the guanine nucleotide binding site and alternates between an active, GTP-bound state and an inactive, GDP-bound state. Signaling by an activated GPCR promotes GDP release and GTP binding. The alpha subunit has a low GTPase activity that converts bound GTP to GDP, thereby terminating the signal. Both GDP release and GTP hydrolysis are modulated by numerous regulatory proteins. Signaling is mediated via effector proteins, such as adenylate cyclase. Inhibits adenylate cyclase activity, leading to decreased intracellular cAMP levels. This chain is Guanine nucleotide-binding protein G(o) subunit alpha (GNAO1), found in Homo sapiens (Human).